Reading from the N-terminus, the 238-residue chain is Probable 2-phosphosulfolactate phosphatase (238 aa).

It belongs to the ComB family. Mg(2+) serves as cofactor.

It catalyses the reaction (2R)-O-phospho-3-sulfolactate + H2O = (2R)-3-sulfolactate + phosphate. This Clostridium botulinum (strain Eklund 17B / Type B) protein is Probable 2-phosphosulfolactate phosphatase.